Consider the following 639-residue polypeptide: Probable serine/threonine-protein kinase DDB_G0282777 (639 aa).

The stretch at 7–122 (LKENKESLKD…EDLKSIILTS (116 aa)) forms a coiled coil. The Protein kinase domain occupies 233–588 (MHMVGDIKKG…SNNNQNHTNI (356 aa)). Residues 239 to 247 (IKKGSISSD) and K284 contribute to the ATP site. The Proton acceptor role is filled by D439. The segment at 601 to 639 (NTLETSTTNPNTNTTTSDTNTSTTSTTNTNTTTSNTITA) is disordered.

The protein belongs to the protein kinase superfamily. Ser/Thr protein kinase family.

It carries out the reaction L-seryl-[protein] + ATP = O-phospho-L-seryl-[protein] + ADP + H(+). The enzyme catalyses L-threonyl-[protein] + ATP = O-phospho-L-threonyl-[protein] + ADP + H(+). The protein is Probable serine/threonine-protein kinase DDB_G0282777 of Dictyostelium discoideum (Social amoeba).